A 156-amino-acid polypeptide reads, in one-letter code: Iron sulfur cluster assembly protein 2, mitochondrial (156 aa).

A mitochondrion-targeting transit peptide spans 1–26 (MFARLANPAHFKPLTGSHITRAAKRL).

Belongs to the NifU family. Component of the core Fe-S cluster (ISC) assembly machinery. Interacts with frataxin. Interacts with the mitochondrial co-chaperones JAC1 and SSQ1. Interacts with NFS1. Interacts with ferredoxin YAH1; interacts with the reduced form. Requires [2Fe-2S] cluster as cofactor.

The protein localises to the mitochondrion matrix. Its pathway is cofactor biosynthesis; iron-sulfur cluster biosynthesis. In terms of biological role, scaffold protein for the de novo synthesis of iron-sulfur (Fe-S) clusters within mitochondria, which is required for maturation of both mitochondrial and cytoplasmic [2Fe-2S] and [4Fe-4S] proteins. First, a [2Fe-2S] cluster is transiently assembled on the scaffold proteins ISU1 and ISU2. In a second step, the cluster is released from ISU1/ISU2, transferred to glutaredoxin GRX5, followed by the formation of mitochondrial [2Fe-2S] proteins, the synthesis of [4Fe-4S] clusters and their target-specific insertion into the recipient apoproteins. Cluster assembly on ISU1/ISU2 depends on the function of the cysteine desulfurase complex NFS1-ISD11, which serves as the sulfur donor for cluster synthesis, the iron-binding protein frataxin (YFH1) as the putative iron donor, and the electron transfer chain comprised of ferredoxin reductase ARH1 and ferredoxin YAH1, which receive their electrons from NADH. Fe-S cluster release from ISU1/ISU2 is achieved by interaction with the Hsp70 chaperone SSQ1, assisted by the DnaJ-like co-chaperone JAC1 and the nucleotide exchange factor MGE1. ISU1 is the major isoform in yeast, while ISU2 is not detectable in cells grown to stationary phase. Also involved in production of a sulfur precursor required for thiolation of cytoplasmic tRNAs. In Saccharomyces cerevisiae (strain ATCC 204508 / S288c) (Baker's yeast), this protein is Iron sulfur cluster assembly protein 2, mitochondrial.